The sequence spans 79 residues: Small ribosomal subunit protein bS16 (79 aa).

It belongs to the bacterial ribosomal protein bS16 family.

The sequence is that of Small ribosomal subunit protein bS16 from Oleidesulfovibrio alaskensis (strain ATCC BAA-1058 / DSM 17464 / G20) (Desulfovibrio alaskensis).